The chain runs to 564 residues: Solute carrier family 22 member 21 (564 aa).

Topologically, residues 1 to 20 (MLDYDEVTAFLGEWGTFQRL) are cytoplasmic. Residues 21–41 (IFFLLSASIIPNGFTGLSAVF) traverse the membrane as a helical segment. Residues 42–142 (LTAIPEHRCR…DLVCKDDWKA (101 aa)) lie on the Extracellular side of the membrane. N-linked (GlcNAc...) asparagine glycans are attached at residues Asn57, Asn64, and Asn91. Residues 143–163 (PLTTSFFYVGVLLGSFISGQL) form a helical membrane-spanning segment. The Cytoplasmic portion of the chain corresponds to 164–172 (SDRFGRKNI). A helical transmembrane segment spans residues 173–193 (LFLTMAMHTGFSFIQVFSVNF). At 194 to 197 (EMFT) the chain is on the extracellular side. The helical transmembrane segment at 198-218 (LLYTLVGMGHISNYVAAFVLG) threads the bilayer. 218–225 (GTEMLSKS) provides a ligand contact to ATP. Residues 219 to 232 (TEMLSKSVRIIFAT) are Cytoplasmic-facing. Residues 233-253 (LGVCIFFAFGFMVLPLFAYFI) form a helical membrane-spanning segment. Topologically, residues 254 to 257 (REWR) are extracellular. Residues 258-278 (RLLLAITLPGVLCGALWWFIP) traverse the membrane as a helical segment. At 279–344 (ESPRWLISQG…YDLVRTPNIR (66 aa)) the chain is on the cytoplasmic side. Residues 345–365 (ILTIMSIILWLTISVGYFGLS) traverse the membrane as a helical segment. At 366–376 (LDTPNLNGNIY) the chain is on the extracellular side. A helical transmembrane segment spans residues 377–397 (VNCFLLAAVEVPAYVLAWLLL). Over 398-409 (QHVSRRYSMAGS) the chain is Cytoplasmic. Residues 410–430 (LFLGGSVLLLVQLVPSDLHYL) traverse the membrane as a helical segment. Over 431 to 433 (STT) the chain is Extracellular. The chain crosses the membrane as a helical span at residues 434–454 (LVMVGKFGITSAYSMVYVYTA). At 455–465 (ELYPTVVRNMG) the chain is on the cytoplasmic side. The helical transmembrane segment at 466–486 (VGVSSTASRLGSILSPYFVYL) threads the bilayer. Residues 487–491 (GAYDR) lie on the Extracellular side of the membrane. The chain crosses the membrane as a helical span at residues 492 to 512 (RLPYILMGSLTILTAIITLFF). At 513–564 (PESSGVSLPETIDEMQKVKKLKQRQSLSKKGSPKESKGNVSRTSRTSEPKGF) the chain is on the cytoplasmic side. A disordered region spans residues 532 to 564 (KLKQRQSLSKKGSPKESKGNVSRTSRTSEPKGF).

This sequence belongs to the major facilitator (TC 2.A.1) superfamily. Organic cation transporter (TC 2.A.1.19) family. As to expression, predominantly expressed in testis.

It is found in the peroxisome membrane. Sodium-ion independent, medium affinity carnitine transporter. Also transports organic cations such as tetraethylammonium (TEA) without the involvement of sodium. Relative uptake activity ratio of carnitine to TEA is 746. This chain is Solute carrier family 22 member 21 (Slc22a21), found in Mus musculus (Mouse).